The primary structure comprises 457 residues: Beta-1,4-mannosyltransferase egh (457 aa).

A run of 6 helical transmembrane segments spans residues 8 to 28, 35 to 55, 57 to 77, 346 to 366, 378 to 398, and 415 to 435; these read LLHCTLLITVIVTFEVFSGGI, FTLVDPWTEYGQLATVLLYLL, FLTLLTLPQVLFNFCGLVFYN, LLGISVYSWVTMPLSTSNIIF, VDFVCAFIAAINIYMYVFGVI, and VLGAVCTIPVNVVIENVAVIW.

The protein belongs to the glycosyltransferase 2 family.

The protein localises to the membrane. Glycosyltransferase with a proposed role in glycosphingolipid biosynthesis. Neurogenic protein implicated in epithelial development. Critical component of a differential oocyte-follicle cell adhesive system. This is Beta-1,4-mannosyltransferase egh (egh) from Drosophila melanogaster (Fruit fly).